Here is a 203-residue protein sequence, read N- to C-terminus: Small ribosomal subunit protein uS5 (203 aa).

Positions M1–K18 are enriched in basic and acidic residues. Positions M1–K36 are disordered. The S5 DRBM domain maps to F49–V112.

The protein belongs to the universal ribosomal protein uS5 family. As to quaternary structure, part of the 30S ribosomal subunit. Contacts proteins S4 and S8.

With S4 and S12 plays an important role in translational accuracy. In terms of biological role, located at the back of the 30S subunit body where it stabilizes the conformation of the head with respect to the body. The protein is Small ribosomal subunit protein uS5 of Ureaplasma urealyticum serovar 10 (strain ATCC 33699 / Western).